A 253-amino-acid chain; its full sequence is uncharacterized protein (253 aa).

10 to 35 contacts NADP(+); sequence ISGAASKRGIGRATAELFASHGARVA. Serine 144 provides a ligand contact to substrate. The active-site Proton acceptor is the tyrosine 159.

The protein belongs to the short-chain dehydrogenases/reductases (SDR) family.

This is an uncharacterized protein from Sinorhizobium fredii (strain NBRC 101917 / NGR234).